Reading from the N-terminus, the 293-residue chain is Glutamyl-Q tRNA(Asp) synthetase (293 aa).

L-glutamate contacts are provided by residues 4–8 (RYAPS) and E40. Positions 7-17 (PSPSGDLHFGN) match the 'HIGH' region motif. Residues C92, C94, Y113, and C117 each contribute to the Zn(2+) site. Positions 180 and 198 each coordinate L-glutamate. The 'KMSKS' region signature appears at 236 to 240 (RLAKR). Residue K239 participates in ATP binding.

Belongs to the class-I aminoacyl-tRNA synthetase family. GluQ subfamily. It depends on Zn(2+) as a cofactor.

Functionally, catalyzes the tRNA-independent activation of glutamate in presence of ATP and the subsequent transfer of glutamate onto a tRNA(Asp). Glutamate is transferred on the 2-amino-5-(4,5-dihydroxy-2-cyclopenten-1-yl) moiety of the queuosine in the wobble position of the QUC anticodon. This chain is Glutamyl-Q tRNA(Asp) synthetase, found in Corynebacterium glutamicum (strain ATCC 13032 / DSM 20300 / JCM 1318 / BCRC 11384 / CCUG 27702 / LMG 3730 / NBRC 12168 / NCIMB 10025 / NRRL B-2784 / 534).